The following is a 432-amino-acid chain: Adenosylhomocysteinase (432 aa).

Ser2 carries the post-translational modification N-acetylserine. Substrate contacts are provided by Thr57, Asp131, and Glu156. A Phosphoserine modification is found at Ser183. An NAD binding region spans residues Ser183–Ala350. Residues Lys186 and Asp190 each coordinate substrate. The residue at position 186 (Lys186) is an N6-(2-hydroxyisobutyryl)lysine. Position 193 is a phosphotyrosine (Tyr193).

Belongs to the adenosylhomocysteinase family. As to quaternary structure, homotetramer. Interaction with AHCYL1. It depends on NAD(+) as a cofactor.

The protein resides in the cytoplasm. The protein localises to the melanosome. Its subcellular location is the nucleus. It is found in the endoplasmic reticulum. The catalysed reaction is S-adenosyl-L-homocysteine + H2O = L-homocysteine + adenosine. It participates in amino-acid biosynthesis; L-homocysteine biosynthesis; L-homocysteine from S-adenosyl-L-homocysteine: step 1/1. Functionally, catalyzes the hydrolysis of S-adenosyl-L-homocysteine to form adenosine and homocysteine. Binds copper ions. In Bos taurus (Bovine), this protein is Adenosylhomocysteinase (AHCY).